A 328-amino-acid chain; its full sequence is L-serine dehydratase/L-threonine deaminase (328 aa).

N6-(pyridoxal phosphate)lysine is present on K41. Residue P128 coordinates pyridoxal 5'-phosphate.

The protein belongs to the serine/threonine dehydratase family. As to quaternary structure, homodimer. It depends on pyridoxal 5'-phosphate as a cofactor. As to expression, predominantly expressed in the perivenous regions of the liver.

Its subcellular location is the cytoplasm. It carries out the reaction L-serine = pyruvate + NH4(+). It catalyses the reaction L-threonine = 2-oxobutanoate + NH4(+). It participates in carbohydrate biosynthesis; gluconeogenesis. Functionally, catalyzes the pyridoxal-phosphate-dependent dehydrative deamination of L-threonine and L-serine to ammonia and alpha-ketobutyrate and pyruvate, respectively. The protein is L-serine dehydratase/L-threonine deaminase (SDS) of Homo sapiens (Human).